The primary structure comprises 589 residues: Probable galacturonosyltransferase 6 (589 aa).

The Cytoplasmic segment spans residues 1–6 (MKQIRR). The chain crosses the membrane as a helical; Signal-anchor for type II membrane protein span at residues 7-27 (WQRILILALLSISVFAPLIFV). Residues 28-589 (SNRLKSITPV…TYLQQCNLQA (562 aa)) are Lumenal-facing. N-linked (GlcNAc...) asparagine glycosylation is found at N83 and N126. Residues 127–151 (KTDFKPPLSKGEKNTRVQPDRATDV) are disordered. Positions 136–151 (KGEKNTRVQPDRATDV) are enriched in basic and acidic residues. 2 N-linked (GlcNAc...) asparagine glycosylation sites follow: N317 and N454.

It belongs to the glycosyltransferase 8 family. Expressed in roots, inflorescences, siliques, leaves and stems.

It is found in the golgi apparatus membrane. It participates in glycan metabolism; pectin biosynthesis. Functionally, probably involved in pectin biosynthesis in cell walls. This Arabidopsis thaliana (Mouse-ear cress) protein is Probable galacturonosyltransferase 6 (GAUT6).